The primary structure comprises 237 residues: MEKREELYRGKAKSVYKTDDANRLILLFRNDTSAFDGKRIEQLDRKGMVNNKFNAFIMQKLEAAGIPTQFDKLLGDNECLVKKLDMIPVECVVRNYAAGSLVKRLGVEEGLKLNPYTFELFLKDDAKGDPFINESHVVAFGWGTAEQLARMKELSLKVNDVLSKLFDDAGLLLVDFKLEFGVFHDGSIVLGDEFSPDGCRLWDKDTKKKMDKDRFRQGLGDVIEAYEEVANRLGVPL.

Belongs to the SAICAR synthetase family.

The enzyme catalyses 5-amino-1-(5-phospho-D-ribosyl)imidazole-4-carboxylate + L-aspartate + ATP = (2S)-2-[5-amino-1-(5-phospho-beta-D-ribosyl)imidazole-4-carboxamido]succinate + ADP + phosphate + 2 H(+). Its pathway is purine metabolism; IMP biosynthesis via de novo pathway; 5-amino-1-(5-phospho-D-ribosyl)imidazole-4-carboxamide from 5-amino-1-(5-phospho-D-ribosyl)imidazole-4-carboxylate: step 1/2. The chain is Phosphoribosylaminoimidazole-succinocarboxamide synthase from Pseudomonas fluorescens (strain SBW25).